Consider the following 187-residue polypeptide: ATP-dependent protease subunit HslV (187 aa).

T13 is an active-site residue. Residues A172, C175, and T178 each contribute to the Na(+) site.

This sequence belongs to the peptidase T1B family. HslV subfamily. As to quaternary structure, a double ring-shaped homohexamer of HslV is capped on each side by a ring-shaped HslU homohexamer. The assembly of the HslU/HslV complex is dependent on binding of ATP.

Its subcellular location is the cytoplasm. The catalysed reaction is ATP-dependent cleavage of peptide bonds with broad specificity.. With respect to regulation, allosterically activated by HslU binding. Its function is as follows. Protease subunit of a proteasome-like degradation complex believed to be a general protein degrading machinery. This Caulobacter sp. (strain K31) protein is ATP-dependent protease subunit HslV.